Here is a 102-residue protein sequence, read N- to C-terminus: Carboxysome shell protein CsoS1C (102 aa).

The 86-residue stretch at 8–93 folds into the BMC domain; that stretch reads ALGMIETRGL…PHKEVEPVLA (86 aa).

It belongs to the bacterial microcompartments protein family. CsoS1 subfamily. Homohexamer with a small central pore.

The protein resides in the carboxysome. Functionally, one of shell proteins of the carboxysome, a polyhedral inclusion where RuBisCO (ribulose bisphosphate carboxylase, ccbL-ccbS) is sequestered. Assembles into hexamers which make sheets that form the facets of the polyhedral carboxysome. The shell probably limits the diffusion of CO(2) into and out of the carboxysome. The chain is Carboxysome shell protein CsoS1C from Hydrogenovibrio crunogenus (strain DSM 25203 / XCL-2) (Thiomicrospira crunogena).